We begin with the raw amino-acid sequence, 120 residues long: Large ribosomal subunit protein uL22 (120 aa).

The protein belongs to the universal ribosomal protein uL22 family. As to quaternary structure, part of the 50S ribosomal subunit.

In terms of biological role, this protein binds specifically to 23S rRNA; its binding is stimulated by other ribosomal proteins, e.g. L4, L17, and L20. It is important during the early stages of 50S assembly. It makes multiple contacts with different domains of the 23S rRNA in the assembled 50S subunit and ribosome. Its function is as follows. The globular domain of the protein is located near the polypeptide exit tunnel on the outside of the subunit, while an extended beta-hairpin is found that lines the wall of the exit tunnel in the center of the 70S ribosome. The chain is Large ribosomal subunit protein uL22 from Borreliella afzelii (strain PKo) (Borrelia afzelii).